The following is a 569-amino-acid chain: RNA demethylase ALKBH10B (569 aa).

Residues 118–151 (QKVAAKKAEDLKQKKTEEEAEEDLKEVVATEEEE) are a coiled coil. The disordered stretch occupies residues 164 to 190 (ENDVNGDVEDVEDDSPTSDITDSGSHQ). A compositionally biased stretch (acidic residues) spans 167–179 (VNGDVEDVEDDSP). Positions 180–189 (TSDITDSGSH) are enriched in polar residues. Residues H366, E368, and H421 each coordinate Fe cation. R430 serves as a coordination point for 2-oxoglutarate. Basic residues predominate over residues 531–545 (KHVKHLPPRAQKKRL). A disordered region spans residues 531–569 (KHVKHLPPRAQKKRLLPLPPAASSSPAGGSTSEPVITVG). Over residues 551 to 560 (AASSSPAGGS) the composition is skewed to low complexity.

The protein belongs to the alkB family. Fe(2+) is required as a cofactor.

It carries out the reaction an N(6)-methyladenosine in mRNA + 2-oxoglutarate + O2 = an adenosine in mRNA + formaldehyde + succinate + CO2. Functionally, dioxygenase that demethylates RNA by oxidative demethylation: specifically demethylates N(6)-methyladenosine (m6A) RNA, the most prevalent internal modification of messenger RNA (mRNA) in higher eukaryotes. ALKBH10B-mediated mRNA m6A demethylation stabilizes the mRNA of the key flowering time regulators FT, SPL3 and SPL9, which are involved in the control of floral transition. The polypeptide is RNA demethylase ALKBH10B (Arabidopsis thaliana (Mouse-ear cress)).